Here is a 327-residue protein sequence, read N- to C-terminus: MLTVPQQTIRSGCKINLFLEITGVRPDGYHELVTLFYPLSEPFDLMEISPATHGVTVLSERADLCGDKNIICKAWHTFAAAGGTPPPMQVRLAKGVPDGAGLGGGSANAAAVLKLLNTAGGAPRFSDTALAKIAAQVGADVPFFLHNTPCLATGIGEKLVPAPLDLSGWHLVLVCPGVQVSTPWAYNRWDTLYRSGLHHPCGQLPAAHAPAACAQLQTTGPDRPVRAETGCAGRKKNTCRSLTTERQADSKPVSRALWLFNSFETVVFSAYSELRQHKNTLLAHGASAALMSGSGSSLFGLFRDKAQAEAAMLHFCQRSIAVYVHRL.

K14 is an active-site residue. 97–107 (PDGAGLGGGSA) provides a ligand contact to ATP. The active site involves D140.

The protein belongs to the GHMP kinase family. IspE subfamily.

It catalyses the reaction 4-CDP-2-C-methyl-D-erythritol + ATP = 4-CDP-2-C-methyl-D-erythritol 2-phosphate + ADP + H(+). Its pathway is isoprenoid biosynthesis; isopentenyl diphosphate biosynthesis via DXP pathway; isopentenyl diphosphate from 1-deoxy-D-xylulose 5-phosphate: step 3/6. Its function is as follows. Catalyzes the phosphorylation of the position 2 hydroxy group of 4-diphosphocytidyl-2C-methyl-D-erythritol. This is 4-diphosphocytidyl-2-C-methyl-D-erythritol kinase from Oleidesulfovibrio alaskensis (strain ATCC BAA-1058 / DSM 17464 / G20) (Desulfovibrio alaskensis).